A 164-amino-acid polypeptide reads, in one-letter code: 3-hydroxyacyl-[acyl-carrier-protein] dehydratase FabZ (164 aa).

H70 is a catalytic residue.

The protein belongs to the thioester dehydratase family. FabZ subfamily.

It is found in the cytoplasm. It carries out the reaction a (3R)-hydroxyacyl-[ACP] = a (2E)-enoyl-[ACP] + H2O. In terms of biological role, involved in unsaturated fatty acids biosynthesis. Catalyzes the dehydration of short chain beta-hydroxyacyl-ACPs and long chain saturated and unsaturated beta-hydroxyacyl-ACPs. The sequence is that of 3-hydroxyacyl-[acyl-carrier-protein] dehydratase FabZ from Synechocystis sp. (strain ATCC 27184 / PCC 6803 / Kazusa).